The primary structure comprises 150 residues: CCAAT/enhancer-binding protein gamma (150 aa).

Residue lysine 3 forms a Glycyl lysine isopeptide (Lys-Gly) (interchain with G-Cter in SUMO2) linkage. Positions glycine 27 to valine 94 are disordered. Positions leucine 28 to alanine 37 are enriched in low complexity. Residues serine 56–asparagine 72 show a composition bias toward basic and acidic residues. Positions serine 62–histidine 125 constitute a bZIP domain. Positions arginine 66 to arginine 93 are basic motif. Residues leucine 97–leucine 118 are leucine-zipper.

Belongs to the bZIP family. C/EBP subfamily. In terms of assembly, binds DNA as a dimer and can form stable heterodimers with CEBPA and CEBPB. Interacts with ZNF638; this interaction increases transcriptional activation.

The protein localises to the nucleus. Its function is as follows. Transcription factor that binds to the promoter and the enhancer regions of target genes. Binds to the promoter and the enhancer of the alpha-1-fetoprotein gene. Binds to the enhancer element PRE-I (positive regulatory element-I) of the IL-4 gene. Binds to the promoter and the enhancer of the immunoglobulin heavy chain. Binds to GPE1, a cis-acting element in the G-CSF gene promoter. The protein is CCAAT/enhancer-binding protein gamma (Cebpg) of Rattus norvegicus (Rat).